The sequence spans 104 residues: Larval cuticle protein 65Ab1 (104 aa).

The signal sequence occupies residues 1 to 18 (MKFLIVFVALFAMAVARP). A Chitin-binding type R&amp;R domain is found at 32–102 (PEKWSSDVET…PQGAHLPVAP (71 aa)).

Component of the cuticle of the larva. This chain is Larval cuticle protein 65Ab1, found in Drosophila melanogaster (Fruit fly).